Here is a 90-residue protein sequence, read N- to C-terminus: U7-theraphotoxin-Hhn1a 2 (90 aa).

An N-terminal signal peptide occupies residues 1 to 19 (MKIAIFTVVLALAVFAVLS). A propeptide spanning residues 20 to 50 (FGWEANEKALSEEFTELIHEKEAASETEARE) is cleaved from the precursor. 3 disulfide bridges follow: C51-C65, C58-C70, and C64-C81.

Belongs to the neurotoxin 10 (Hwtx-1) family. 13 (Hntx-13) subfamily. In terms of tissue distribution, expressed by the venom gland.

It localises to the secreted. In terms of biological role, ion channel inhibitor. This Cyriopagopus hainanus (Chinese bird spider) protein is U7-theraphotoxin-Hhn1a 2.